The following is a 295-amino-acid chain: Probable aspartoacylase (295 aa).

Zn(2+) is bound by residues histidine 16 and glutamate 19. Substrate is bound by residues arginine 58 and 65-66 (NR). Residue histidine 107 participates in Zn(2+) binding. Residues glutamate 166 and tyrosine 277 each coordinate substrate.

Belongs to the AspA/AstE family. Aspartoacylase subfamily. The cofactor is Zn(2+).

It carries out the reaction an N-acyl-L-aspartate + H2O = a carboxylate + L-aspartate. The protein is Probable aspartoacylase of Acaryochloris marina (strain MBIC 11017).